Here is a 319-residue protein sequence, read N- to C-terminus: MATH domain and coiled-coil domain-containing protein At3g58200 (319 aa).

In terms of domain architecture, MATH spans aspartate 6 to valine 132. Residues phenylalanine 255–lysine 302 adopt a coiled-coil conformation.

This chain is MATH domain and coiled-coil domain-containing protein At3g58200, found in Arabidopsis thaliana (Mouse-ear cress).